The chain runs to 609 residues: Snake venom metalloproteinase-disintegrin-like mocarhagin (609 aa).

Positions 1 to 20 (MIQALLVAICLAVFPYQGSS) are cleaved as a signal peptide. Residues 21-191 (IILESGNVND…DEPIEKSSQL (171 aa)) constitute a propeptide that is removed on maturation. Residues 205–400 (KYIEFYVVVD…DRPQCILNKP (196 aa)) form the Peptidase M12B domain. The Ca(2+) site is built by E208 and D292. N303 is a glycosylation site (N-linked (GlcNAc...) asparagine). Disulfide bonds link C316–C395, C356–C379, and C358–C363. The Zn(2+) site is built by H341 and H345. The Ca(2+) site is built by C395, N398, V410, N413, F415, E417, E420, and D423. The region spanning 408–494 (PPVCGNYFVE…KCPKDSFQRN (87 aa)) is the Disintegrin domain. 14 cysteine pairs are disulfide-bonded: C411–C440, C422–C435, C424–C430, C434–C457, C448–C454, C453–C479, C466–C486, C473–C505, C498–C510, C517–C567, C532–C575, C545–C555, C562–C601, and C595–C606. Residues 472-474 (DCD) carry the D/ECD-tripeptide motif. N-linked (GlcNAc...) asparagine glycosylation occurs at N507.

This sequence belongs to the venom metalloproteinase (M12B) family. P-III subfamily. P-IIIa sub-subfamily. As to quaternary structure, monomer. Requires Zn(2+) as cofactor. In terms of tissue distribution, expressed by the venom gland.

The protein localises to the secreted. Inhibited by EDTA and diisopropyl fluorophosphate (DFP). Also inhibited by an excess of zinc or calcium ions. In terms of biological role, snake venom zinc metalloproteinase that inhibits platelet aggregation by cleaving platelet glycoprotein Ib alpha (GP1BA) at Glu-298/Asp-299, and abolishes binding of von Willebrand factor (VWF) to GPIBA. Cleaves P-selectin glycoprotein ligand-1 (PSGL-1/SELPLG) at Tyr-51/Asp-52, and completely abolishes the binding of PSGL-1 to P-selectin. Anionic amino acid sequences containing sulfated tyrosines are needed for cleavages. Inhibits the thrombin-induced platelet aggregation, and the thrombin-induced release of ATP and ADP. Has lectin activity (inhibited by heparin). The polypeptide is Snake venom metalloproteinase-disintegrin-like mocarhagin (Naja mossambica (Mozambique spitting cobra)).